The chain runs to 550 residues: MEEMKPCAANSPPLTPIGFLERAATVYGDCTSIVYGSNTVYTWRETNLRCLRVASSLSSIGIGRSDVVSVLSPNTPAMYELQFAVPMSGAILNNINTRLDARTVSVLLRHCESKLLFVDVFSVDLAVEAVSMMTTDPPILVVIADKEEEGGVADVADLSKFSYTYDDLIERGDPGFKWIRPESEWDPVVLNYTSGTTSAPKGVVHCHRGIFVMSVDSLIDWAVPKNPVYLWTLPIFHSNGWTNPWGIAAVGGTNVCLRKFDAPLIYRLIRDHGVTHMCGAPVVLNMLSATQESQPLNHPVNILTAGSPPPATVLLRAESIGFVISHGYGLTETAGVIVSCAWKPKWNHLPASDRARLKARQGVRTVGFTEIDVVDPESGLSVERNGETVGEIVMRGSSVMLGYLKDPVGTEKALKNGWFYTGDVGVIHSDGYLEIKDRSKDIIITGGENVSSVEVETVLYTIPAVNEVAVVARPDEFWGETPCAFVSLKNGFSGKPTEEELMEYCRKKMPKYMVPKTVSFMDELPKSSTGKVTKFVLRDIAKKMGDKTIS.

The protein belongs to the ATP-dependent AMP-binding enzyme family. As to expression, expressed at low levels in roots, leaves, stems and developing seeds.

Functionally, may act as an acid--thiol ligase that activates carboxylic acids by forming acyl-CoAs. This chain is Probable acyl-activating enzyme 6 (AAE6), found in Arabidopsis thaliana (Mouse-ear cress).